The chain runs to 241 residues: Nicotinamide riboside kinase (241 aa).

21–29 (GCSSSGKST) provides a ligand contact to ATP. Ser28 and Asp47 together coordinate Mg(2+). The active-site Proton acceptor is Asp47. Substrate is bound by residues 47-50 (DDFY), 67-68 (WD), and Asp68. Arg163 contributes to the ATP binding site. Arg164 provides a ligand contact to substrate. ATP is bound by residues Arg167, 167–169 (RGG), and 213–215 (DVQ). 169-170 (GY) lines the substrate pocket.

It belongs to the uridine kinase family. NRK subfamily.

The enzyme catalyses beta-nicotinamide D-riboside + ATP = beta-nicotinamide D-ribonucleotide + ADP + H(+). It catalyses the reaction beta-D-ribosylnicotinate + ATP = nicotinate beta-D-ribonucleotide + ADP + H(+). The protein operates within cofactor biosynthesis; NAD(+) biosynthesis. In terms of biological role, catalyzes the phosphorylation of nicotinamide riboside (NR) and nicotinic acid riboside (NaR) to form nicotinamide mononucleotide (NMN) and nicotinic acid mononucleotide (NaMN). The chain is Nicotinamide riboside kinase (NRK1) from Eremothecium gossypii (strain ATCC 10895 / CBS 109.51 / FGSC 9923 / NRRL Y-1056) (Yeast).